The following is an 88-amino-acid chain: Small ribosomal subunit protein uS12 (88 aa).

The segment at 1-24 is disordered; that stretch reads RKGRRDKIGKVKTAALKGSPQRRG. At aspartate 81 the chain carries 3-methylthioaspartic acid.

Belongs to the universal ribosomal protein uS12 family. As to quaternary structure, part of the 30S ribosomal subunit. Contacts proteins S8 and S17. May interact with IF1 in the 30S initiation complex.

Functionally, with S4 and S5 plays an important role in translational accuracy. Interacts with and stabilizes bases of the 16S rRNA that are involved in tRNA selection in the A site and with the mRNA backbone. Located at the interface of the 30S and 50S subunits, it traverses the body of the 30S subunit contacting proteins on the other side and probably holding the rRNA structure together. The combined cluster of proteins S8, S12 and S17 appears to hold together the shoulder and platform of the 30S subunit. This is Small ribosomal subunit protein uS12 (rpsL) from Mycobacterium szulgai.